Here is a 549-residue protein sequence, read N- to C-terminus: Ankyrin repeat domain-containing protein SOWAHA (549 aa).

Residues 1-17 (MALAAAAAAAAAGVSQA) form the signal peptide. Disordered stretches follow at residues 82 to 219 (KPRP…PCML) and 235 to 256 (EEPGLRRQLSEEPSPRSSPLLL). The segment covering 203 to 216 (PGPGAAKGPPQQKP) has biased composition (low complexity). The segment covering 235–248 (EEPGLRRQLSEEPS) has biased composition (basic and acidic residues). Residue Ser-260 is modified to Phosphoserine. 2 ANK repeats span residues 345 to 374 (SGFTALHWAAKSGDGEMALQLVEVARRSGA) and 384 to 414 (GGYTPLHLAALHGHEDAAVLLVVRLGAQVHV). The tract at residues 513-549 (PRKKTKIRGGLPAFSEISRRPTPGPLAGLVPSLPPTT) is disordered.

Belongs to the SOWAH family.

The sequence is that of Ankyrin repeat domain-containing protein SOWAHA (SOWAHA) from Homo sapiens (Human).